A 463-amino-acid polypeptide reads, in one-letter code: Cysteine--tRNA ligase (463 aa).

Cys29 is a binding site for Zn(2+). The 'HIGH' region motif lies at 31-41; sequence PTVYDFAHIGN. Zn(2+) contacts are provided by Cys227, His252, and Glu256. The 'KMSKS' region motif lies at 285–289; that stretch reads KMSKS. Lys288 contacts ATP.

The protein belongs to the class-I aminoacyl-tRNA synthetase family. Monomer. Zn(2+) is required as a cofactor.

It localises to the cytoplasm. It catalyses the reaction tRNA(Cys) + L-cysteine + ATP = L-cysteinyl-tRNA(Cys) + AMP + diphosphate. The sequence is that of Cysteine--tRNA ligase from Rhodopseudomonas palustris (strain ATCC BAA-98 / CGA009).